The sequence spans 393 residues: STE20-related kinase adapter protein alpha (393 aa).

Residues S2 and S9 each carry the phosphoserine modification. A Protein kinase domain is found at 32–341; the sequence is YELLSVIGKG…ASTLLNHSFF (310 aa). At T381 the chain carries Phosphothreonine; by LKB1.

This sequence belongs to the protein kinase superfamily. STE Ser/Thr protein kinase family. STE20 subfamily. In terms of assembly, component of a trimeric complex composed of STK11/LKB1, STRAD (STRADA or STRADB) and CAB39/MO25 (CAB39/MO25alpha or CAB39L/MO25beta): the complex tethers STK11/LKB1 in the cytoplasm and stimulates its catalytic activity. In terms of tissue distribution, expressed in liver.

It localises to the nucleus. Its subcellular location is the cytoplasm. Its function is as follows. Pseudokinase which, in complex with CAB39/MO25 (CAB39/MO25alpha or CAB39L/MO25beta), binds to and activates STK11/LKB1. Adopts a closed conformation typical of active protein kinases and binds STK11/LKB1 as a pseudosubstrate, promoting conformational change of STK11/LKB1 in an active conformation. This Rattus norvegicus (Rat) protein is STE20-related kinase adapter protein alpha (Strada).